The following is a 240-amino-acid chain: Pro-opiomelanocortin B (240 aa).

Residues 1–36 form the signal peptide; it reads MFGTFLQNQSVRLNMVCAPWLLAVVVVCVCNPGVEG. Gln37 is modified (pyrrolidone carboxylic acid). A propeptide is located at residue His111. N-acetylserine; in Corticotropin is present on Ser112. Ile124 is subject to Isoleucine amide.

This sequence belongs to the POMC family. Post-translationally, specific enzymatic cleavages at paired basic residues yield the different active peptides. In terms of processing, acetylation of beta-endorphin occurs in a tissue-specific manner. In terms of tissue distribution, pituitary and hypothalamus of adult diploid animals.

The protein resides in the secreted. Its function is as follows. Stimulates the adrenal glands to release cortisol. In terms of biological role, melanocyte-stimulating hormone alpha: Anorexigenic peptide. Increases the pigmentation of skin by increasing melanin production in melanocytes. Functionally, melanocyte-stimulating hormone beta: Increases the pigmentation of skin by increasing melanin production in melanocytes. Beta-endorphin: Endogenous orexigenic opiate. Its function is as follows. Endogenous opiate. The chain is Pro-opiomelanocortin B (pomcb) from Oncorhynchus mykiss (Rainbow trout).